Consider the following 542-residue polypeptide: Protein phosphatase 1G (542 aa).

G2 is lipidated: N-myristoyl glycine. R22 carries the omega-N-methylarginine modification. The 477-residue stretch at 26-502 folds into the PPM-type phosphatase domain; sequence PYGFSAMQGW…DNMTCIIICF (477 aa). 2 residues coordinate Mn(2+): D60 and G61. Disordered regions lie at residues 118–139 and 162–325; these read AGRP…DVDN and QNCQ…SDSG. The residue at position 122 (T122) is a Phosphothreonine. 2 stretches are compositionally biased toward acidic residues: residues 123–139 and 259–309; these read EDED…DVDN and DSED…DEEM. Position 380 is an N6-acetyllysine (K380). The Mn(2+) site is built by D438 and D493. The tract at residues 510–542 is disordered; sequence LQPESGKRKLEEALSTEGAEENGNSDKKKAKRD. The residue at position 524 (S524) is a Phosphoserine.

Belongs to the PP2C family. Interacts with NOL3; may dephosphorylate NOL3. Mg(2+) is required as a cofactor. It depends on Mn(2+) as a cofactor.

The protein localises to the cytoplasm. It localises to the membrane. It carries out the reaction O-phospho-L-seryl-[protein] + H2O = L-seryl-[protein] + phosphate. The enzyme catalyses O-phospho-L-threonyl-[protein] + H2O = L-threonyl-[protein] + phosphate. The protein is Protein phosphatase 1G of Rattus norvegicus (Rat).